Reading from the N-terminus, the 213-residue chain is Kynurenine formamidase (213 aa).

Residue Trp18 coordinates substrate. Residues His48, His52, and Asp54 each coordinate Zn(2+). The Proton donor/acceptor role is filled by His58. His160 and Glu172 together coordinate Zn(2+).

This sequence belongs to the Cyclase 1 superfamily. KynB family. As to quaternary structure, homodimer. Zn(2+) serves as cofactor.

The enzyme catalyses N-formyl-L-kynurenine + H2O = L-kynurenine + formate + H(+). It participates in amino-acid degradation; L-tryptophan degradation via kynurenine pathway; L-kynurenine from L-tryptophan: step 2/2. Functionally, catalyzes the hydrolysis of N-formyl-L-kynurenine to L-kynurenine, the second step in the kynurenine pathway of tryptophan degradation. The protein is Kynurenine formamidase of Burkholderia thailandensis (strain ATCC 700388 / DSM 13276 / CCUG 48851 / CIP 106301 / E264).